A 44-amino-acid chain; its full sequence is Protein Tat (44 aa).

Positions A1–P44 are disordered. Residues S7 to S18 are compositionally biased toward polar residues. K14 participates in a covalent cross-link: Glycyl lysine isopeptide (Lys-Gly) (interchain with G-Cter in ubiquitin). A Cell attachment site motif is present at residues G21–D23. Basic and acidic residues predominate over residues G26–S36.

The protein belongs to the lentiviruses Tat family. In terms of assembly, interacts with host CCNT1. Associates with the P-TEFb complex composed at least of Tat, P-TEFb (CDK9 and CCNT1), TAR RNA, RNA Pol II. Recruits the HATs CREBBP, TAF1/TFIID, EP300, PCAF and GCN5L2. Interacts with host KAT5/Tip60; this interaction targets the latter to degradation. Interacts with the host deacetylase SIRT1. Interacts with host capping enzyme RNGTT; this interaction stimulates RNGTT. Binds to host KDR, and to the host integrins ITGAV/ITGB3 and ITGA5/ITGB1. Interacts with host KPNB1/importin beta-1 without previous binding to KPNA1/importin alpha-1. Interacts with EIF2AK2. Interacts with host nucleosome assembly protein NAP1L1; this interaction may be required for the transport of Tat within the nucleus, since the two proteins interact at the nuclear rim. Interacts with host C1QBP/SF2P32; this interaction involves lysine-acetylated Tat. Interacts with the host chemokine receptors CCR2, CCR3 and CXCR4. Interacts with host DPP4/CD26; this interaction may trigger an anti-proliferative effect. Interacts with host LDLR. Interacts with the host extracellular matrix metalloproteinase MMP1. Interacts with host PRMT6; this interaction mediates Tat's methylation. Interacts with, and is ubiquitinated by MDM2/Hdm2. Interacts with host PSMC3 and HTATIP2. Interacts with STAB1; this interaction may overcome SATB1-mediated repression of IL2 and IL2RA (interleukin) in T cells by binding to the same domain than HDAC1. Interacts (when acetylated) with human CDK13, thereby increasing HIV-1 mRNA splicing and promoting the production of the doubly spliced HIV-1 protein Nef. Acetylation by EP300, CREBBP, GCN5L2/GCN5 and PCAF regulates the transactivation activity of Tat. In terms of processing, phosphorylated by EIF2AK2 on serine and threonine residues adjacent to the basic region important for TAR RNA binding and function. Phosphorylation of Tat by EIF2AK2 is dependent on the prior activation of EIF2AK2 by dsRNA. Post-translationally, asymmetrical arginine methylation by host PRMT6 seems to diminish the transactivation capacity of Tat and affects the interaction with host CCNT1. Polyubiquitination by MDM2 does not target Tat to degradation, but activates its transactivation function and fosters interaction with CCNT1 and TAR RNA.

Its subcellular location is the host nucleus. It localises to the host nucleolus. It is found in the host cytoplasm. The protein localises to the secreted. Functionally, transcriptional activator that increases RNA Pol II processivity, thereby increasing the level of full-length viral transcripts. Recognizes a hairpin structure at the 5'-LTR of the nascent viral mRNAs referred to as the transactivation responsive RNA element (TAR) and recruits the cyclin T1-CDK9 complex (P-TEFb complex) that will in turn hyperphosphorylate the RNA polymerase II to allow efficient elongation. The CDK9 component of P-TEFb and other Tat-activated kinases hyperphosphorylate the C-terminus of RNA Pol II that becomes stabilized and much more processive. Other factors such as HTATSF1/Tat-SF1, SUPT5H/SPT5, and HTATIP2 are also important for Tat's function. Besides its effect on RNA Pol II processivity, Tat induces chromatin remodeling of proviral genes by recruiting the histone acetyltransferases (HATs) CREBBP, EP300 and PCAF to the chromatin. This also contributes to the increase in proviral transcription rate, especially when the provirus integrates in transcriptionally silent region of the host genome. To ensure maximal activation of the LTR, Tat mediates nuclear translocation of NF-kappa-B by interacting with host RELA. Through its interaction with host TBP, Tat may also modulate transcription initiation. Tat can reactivate a latently infected cell by penetrating in it and transactivating its LTR promoter. In the cytoplasm, Tat is thought to act as a translational activator of HIV-1 mRNAs. In terms of biological role, extracellular circulating Tat can be endocytosed by surrounding uninfected cells via the binding to several surface receptors such as CD26, CXCR4, heparan sulfate proteoglycans (HSPG) or LDLR. Neurons are rarely infected, but they internalize Tat via their LDLR. Endosomal low pH allows Tat to cross the endosome membrane to enter the cytosol and eventually further translocate into the nucleus, thereby inducing severe cell dysfunctions ranging from cell activation to cell death. Through its interaction with nuclear HATs, Tat is potentially able to control the acetylation-dependent cellular gene expression. Tat seems to inhibit the HAT activity of KAT5/Tip60 and TAF1, and consequently modify the expression of specific cellular genes. Modulates the expression of many cellular genes involved in cell survival, proliferation or in coding for cytokines (such as IL10) or cytokine receptors. May be involved in the derepression of host interleukin IL2 expression. Mediates the activation of cyclin-dependent kinases and dysregulation of microtubule network. Tat plays a role in T-cell and neurons apoptosis. Tat induced neurotoxicity and apoptosis probably contribute to neuroAIDS. Host extracellular matrix metalloproteinase MMP1 cleaves Tat and decreases Tat's mediated neurotoxicity. Circulating Tat also acts as a chemokine-like and/or growth factor-like molecule that binds to specific receptors on the surface of the cells, affecting many cellular pathways. In the vascular system, Tat binds to ITGAV/ITGB3 and ITGA5/ITGB1 integrins dimers at the surface of endothelial cells and competes with bFGF for heparin-binding sites, leading to an excess of soluble bFGF. Binds to KDR/VEGFR-2. All these Tat-mediated effects enhance angiogenesis in Kaposi's sarcoma lesions. This chain is Protein Tat, found in Human immunodeficiency virus type 1 group M subtype B (isolate BRVA) (HIV-1).